The chain runs to 587 residues: Prolycopene isomerase 2, chloroplastic (587 aa).

A chloroplast-targeting transit peptide spans M1–V50.

It belongs to the carotenoid/retinoid oxidoreductase family. CrtISO subfamily. NAD(+) is required as a cofactor. NADP(+) serves as cofactor. Requires FAD as cofactor. As to expression, up-regulated in the flower buds and flower lip tissue, while it is weakly expressed in leaves.

The protein localises to the plastid. It is found in the chloroplast membrane. It carries out the reaction 7,7',9,9'-tetra-cis-lycopene = all-trans-lycopene. Its pathway is carotenoid biosynthesis; lycopene biosynthesis. Its function is as follows. Carotene cis-trans-isomerase that converts 7,9,9'-tri-cis-neurosporene to 9'-cis-neurosporene and 7,9,9',7'-tetra-cis-lycopene (also known as prolycopene) into all-trans-lycopene. Isomerization requires redox-active components, suggesting that isomerization is achieved by a reversible redox reaction acting at specific double bonds. Isomerizes adjacent cis-double bonds at C7 and C9 pairwise into the trans-configuration, but is incapable of isomerizing single cis-double bonds at C9 and C9'. This chain is Prolycopene isomerase 2, chloroplastic (CRTISO2), found in Oncidium hybrid cultivar (Orchid).